Consider the following 1119-residue polypeptide: Synaptojanin (1119 aa).

Residues 119–438 (LQRLLSSQMF…GDQCSTIYAG (320 aa)) enclose the SAC domain. The tract at residues 532–826 (GTWNVNGGKN…DRSELKTSDH (295 aa)) is catalytic. 2 disordered regions span residues 986 to 1005 (SLTL…ARSE) and 1042 to 1119 (EHVP…PKNM). A compositionally biased stretch (low complexity) spans 1050–1072 (PQSNNNKSPPQACLFNPFTQSAP). Composition is skewed to pro residues over residues 1073–1085 (SPAP…PLPP) and 1093–1119 (PGPP…PKNM).

Belongs to the synaptojanin family. This sequence in the central section; belongs to the inositol 1,4,5-trisphosphate 5-phosphatase family.

The protein localises to the cytoplasmic vesicle. It is found in the secretory vesicle. The protein resides in the synaptic vesicle. Its subcellular location is the synapse. It carries out the reaction a 1,2-diacyl-sn-glycero-3-phospho-(1D-myo-inositol-4,5-bisphosphate) + H2O = a 1,2-diacyl-sn-glycero-3-phospho-(1D-myo-inositol 4-phosphate) + phosphate. Its function is as follows. Probable inositol 5-phosphatase which regulates synaptic vesicle recycling in neurons by regulating clathrin-mediated endocytosis. This is Synaptojanin from Caenorhabditis elegans.